The sequence spans 125 residues: Histone H1-like protein HC1 (125 aa).

Belongs to the histone H1/H5 family. HCT subfamily.

Functionally, might have a role analogous to that of eukaryotic histone proteins. The protein is Histone H1-like protein HC1 (hctA) of Chlamydia muridarum (strain MoPn / Nigg).